The chain runs to 355 residues: MEYNAFFPPHEGLRLKDIADLFGAELSDDAAGERIIRSVAPVYRAKPDQLCYILSRKSGEELLTCEAGAVICDAALKSLIPSHIPALISKTPHTLFAQVGALLHPSAMRPSLVARMEAEISPAAYVDPSAKLEPGVIVEPMAVIGAGVHIGAGTRIGPGVVIGSDVQIGRDCTIAGGASILAALLGNNVIIHNGARIGQDGFGYAPGPRGMLKIVQIGRVIIQDHVEVGANTTIDRGTMDDTVIGEGTKIDNQVQIGHNVRIGRHCGIVSGVGIAGSTRIGDGVMIGGATGVNGHITIGDGVQIAAMSGVVSDVPAGTRYGGIPARPMKHFLRDMADILARAEERDKKTGEKNNG.

Catalysis depends on His258, which acts as the Proton acceptor.

It belongs to the transferase hexapeptide repeat family. LpxD subfamily. In terms of assembly, homotrimer.

It catalyses the reaction a UDP-3-O-[(3R)-3-hydroxyacyl]-alpha-D-glucosamine + a (3R)-hydroxyacyl-[ACP] = a UDP-2-N,3-O-bis[(3R)-3-hydroxyacyl]-alpha-D-glucosamine + holo-[ACP] + H(+). It participates in bacterial outer membrane biogenesis; LPS lipid A biosynthesis. In terms of biological role, catalyzes the N-acylation of UDP-3-O-acylglucosamine using 3-hydroxyacyl-ACP as the acyl donor. Is involved in the biosynthesis of lipid A, a phosphorylated glycolipid that anchors the lipopolysaccharide to the outer membrane of the cell. This is UDP-3-O-acylglucosamine N-acyltransferase from Agrobacterium fabrum (strain C58 / ATCC 33970) (Agrobacterium tumefaciens (strain C58)).